A 429-amino-acid chain; its full sequence is Histidine--tRNA ligase (429 aa).

It belongs to the class-II aminoacyl-tRNA synthetase family. As to quaternary structure, homodimer.

Its subcellular location is the cytoplasm. It carries out the reaction tRNA(His) + L-histidine + ATP = L-histidyl-tRNA(His) + AMP + diphosphate + H(+). The polypeptide is Histidine--tRNA ligase (Acidovorax ebreus (strain TPSY) (Diaphorobacter sp. (strain TPSY))).